The primary structure comprises 362 residues: MTSQVNAVPTDSLAARLARPELLSLEPYQSARRIGGSGEIWVNANESPFNRTGIDGANRYPECQPPGLIAAYAAYAGVAAHELVCGRGADEAIELLIRTFCVPGQDSIGIFSPTYGMYAISAATFNVAVNTLPLAEDFSLPDDISALTGSKLVFVCNPNNPTGTLLPLGEIARVAKTFPNALVVVDEAYIEFAHNADGSPAQSATSLMAEFENLVILRTLSKAFGLAGARCGFLLAKPSVCELVMRVIAPYPVPVPVSVIAEKALSVMGIAQMRADVVLLNKQGARLALALTEAGLSVLPSGGNYVLAFSNDVEVLARALTKAGIVARRYSHPRLKDAIRISYASEQQTDSIIEAIGRIDSK.

K222 carries the post-translational modification N6-(pyridoxal phosphate)lysine.

It belongs to the class-II pyridoxal-phosphate-dependent aminotransferase family. Histidinol-phosphate aminotransferase subfamily. As to quaternary structure, homodimer. The cofactor is pyridoxal 5'-phosphate.

It catalyses the reaction L-histidinol phosphate + 2-oxoglutarate = 3-(imidazol-4-yl)-2-oxopropyl phosphate + L-glutamate. Its pathway is amino-acid biosynthesis; L-histidine biosynthesis; L-histidine from 5-phospho-alpha-D-ribose 1-diphosphate: step 7/9. The polypeptide is Histidinol-phosphate aminotransferase (Shewanella amazonensis (strain ATCC BAA-1098 / SB2B)).